The following is a 240-amino-acid chain: Ribonuclease PH (240 aa).

Phosphate contacts are provided by residues arginine 87 and 125–127 (GTR).

Belongs to the RNase PH family. In terms of assembly, homohexameric ring arranged as a trimer of dimers.

The enzyme catalyses tRNA(n+1) + phosphate = tRNA(n) + a ribonucleoside 5'-diphosphate. Functionally, phosphorolytic 3'-5' exoribonuclease that plays an important role in tRNA 3'-end maturation. Removes nucleotide residues following the 3'-CCA terminus of tRNAs; can also add nucleotides to the ends of RNA molecules by using nucleoside diphosphates as substrates, but this may not be physiologically important. Probably plays a role in initiation of 16S rRNA degradation (leading to ribosome degradation) during starvation. This is Ribonuclease PH from Pseudomonas fluorescens (strain ATCC BAA-477 / NRRL B-23932 / Pf-5).